The sequence spans 873 residues: Cyanophycin synthetase (873 aa).

The region spanning 224–480 is the ATP-grasp domain; it reads KTILQDAGIP…VAAPVLDMLF (257 aa). 495-501 contributes to the ATP binding site; the sequence is GTNGKTT.

In the C-terminal section; belongs to the MurCDEF family. Homodimer.

The enzyme catalyses [L-4-(L-arginin-2-N-yl)aspartate](n) + L-aspartate + ATP = [L-4-(L-arginin-2-N-yl)aspartate](n)-L-aspartate + ADP + phosphate + H(+). It carries out the reaction [L-4-(L-arginin-2-N-yl)aspartate](n)-L-aspartate + L-arginine + ATP = [L-4-(L-arginin-2-N-yl)aspartate](n+1) + ADP + phosphate + H(+). Catalyzes the ATP-dependent polymerization of arginine and aspartate to multi-L-arginyl-poly-L-aspartic acid (cyanophycin; a water-insoluble reserve polymer). The chain is Cyanophycin synthetase (cphA) from Synechocystis sp. (strain ATCC 27184 / PCC 6803 / Kazusa).